Reading from the N-terminus, the 479-residue chain is Transmembrane protein 161A (479 aa).

The first 28 residues, 1 to 28 (MAVLGVQLVVTLLTATLMHRLAPHCSFA), serve as a signal peptide directing secretion. Over 29-98 (RWLLCNGSLF…LTTVDALVLR (70 aa)) the chain is Extracellular. N-linked (GlcNAc...) asparagine glycosylation is present at Asn34. Phosphoserine is present on Ser69. Residues 99–119 (FFLEYQWFVDFAVYSGGVYLF) form a helical membrane-spanning segment. The Cytoplasmic segment spans residues 120–134 (TEAYYYMLGPAKETN). The chain crosses the membrane as a helical span at residues 135-155 (IAVFWCLLTVTFSIKMFLTVT). Over 156–166 (RLYFSAEEGGE) the chain is Extracellular. Residues 167-187 (RSVCLTFAFLFLLLAMLVQVV) form a helical membrane-spanning segment. Residues 188–224 (REETLELGLEPGLASMTQNLEPLLKKQGWDWALPVAK) lie on the Cytoplasmic side of the membrane. Residues 225–245 (LAIRVGLAVVGSVLGAFLTFP) traverse the membrane as a helical segment. Residues 246–263 (GLRLAQTHRDALTMSEDR) are Extracellular-facing. A helical membrane pass occupies residues 264-284 (PMLQFLLHTSFLSPLFILWLW). Residues 285–304 (TKPIARDFLHQPPFGETRFS) are Cytoplasmic-facing. Residues 305-325 (LLSDSAFDSGRLWLLVVLCLL) traverse the membrane as a helical segment. Over 326 to 370 (RLAVTRPHLQAYLCLAKARVEQLRREAGRIEAREIQQRVVRVYCY) the chain is Extracellular. Residues 371-391 (VTVVSLQYLTPLILTLNCTLL) form a helical membrane-spanning segment. Over 392-449 (LKTLGGYSWGLGPAPLLSPDPSSASAAPIGSGEDEVQQTAARIAGALGGLLTPLFLRG) the chain is Cytoplasmic. The chain crosses the membrane as a helical span at residues 450 to 470 (VLAYLIWWTAACQLLASLFGL). The Extracellular portion of the chain corresponds to 471–479 (YFHQHLAGS).

The protein belongs to the TMEM161 family.

The protein localises to the membrane. Its function is as follows. May play a role in protection against oxidative stress. Overexpression leads to reduced levels of oxidant-induced DNA damage and apoptosis. This is Transmembrane protein 161A (TMEM161A) from Homo sapiens (Human).